The primary structure comprises 2138 residues: Protein virilizer homolog (2138 aa).

Disordered stretches follow at residues 1503-1574, 1638-1664, 1855-1881, 2013-2035, and 2058-2094; these read RLPQ…SMHV, NPTP…DDLQ, PVIP…SSGG, PMQP…QGVS, and YYHP…QESG. A compositionally biased stretch (polar residues) spans 1528–1541; it reads ENSSVDIPTQNSIQ. Composition is skewed to polar residues over residues 1862–1881 and 2025–2035; these read DSLS…SSGG and QISQPSEQGVS.

Belongs to the vir family. As to quaternary structure, interacts with MTB, FIP37 and HAKAI. Associates with MTA, MTB, FIP37 and HAKAI to form the m6A writer complex which is essential for adenosine methylation at specific mRNA sequences.

The protein localises to the nucleus speckle. The protein resides in the nucleus. It localises to the nucleoplasm. Its function is as follows. Subunit of the N6-methyltransferase complex, a multiprotein complex that mediates N6-methyladenosine (m6A) methylation at the 5'-[AG]GAC-3' consensus sites of some mRNAs. Associates with MTA, MTB, FIP37 and HAKAI to form the m6A writer complex which is essential for adenosine methylation at specific mRNA sequences. N6-methyladenosine (m6A) plays a role in mRNA stability, processing, translation efficiency and editing. This Arabidopsis thaliana (Mouse-ear cress) protein is Protein virilizer homolog.